The following is a 207-amino-acid chain: ATP phosphoribosyltransferase (207 aa).

It belongs to the ATP phosphoribosyltransferase family. Short subfamily. As to quaternary structure, heteromultimer composed of HisG and HisZ subunits.

The protein localises to the cytoplasm. The catalysed reaction is 1-(5-phospho-beta-D-ribosyl)-ATP + diphosphate = 5-phospho-alpha-D-ribose 1-diphosphate + ATP. It functions in the pathway amino-acid biosynthesis; L-histidine biosynthesis; L-histidine from 5-phospho-alpha-D-ribose 1-diphosphate: step 1/9. Catalyzes the condensation of ATP and 5-phosphoribose 1-diphosphate to form N'-(5'-phosphoribosyl)-ATP (PR-ATP). Has a crucial role in the pathway because the rate of histidine biosynthesis seems to be controlled primarily by regulation of HisG enzymatic activity. The polypeptide is ATP phosphoribosyltransferase (Dictyoglomus thermophilum (strain ATCC 35947 / DSM 3960 / H-6-12)).